The primary structure comprises 328 residues: Coiled-coil domain-containing protein 54 (328 aa).

Residues 93-148 adopt a coiled-coil conformation; that stretch reads KIQEKTDFFQKQMQVLETKMNVNENKQCATAEDIFSVKEDVDALKKKVTELGNQNS. Thr-182 is subject to Phosphothreonine.

The polypeptide is Coiled-coil domain-containing protein 54 (CCDC54) (Bos taurus (Bovine)).